A 477-amino-acid chain; its full sequence is Prolyl tri/tetrapeptidyl aminopeptidase (477 aa).

The first 27 residues, 1–27 (MRKALRSLLAASMLIGAIGAGSATAEA), serve as a signal peptide directing secretion. Positions 28-33 (ASITAP) are excised as a propeptide. Positions 448–477 (QKDEKAAKPLAPFDAKLDRVKNDKQSALRP) are disordered. Residues 462–477 (AKLDRVKNDKQSALRP) are compositionally biased toward basic and acidic residues.

The protein belongs to the peptidase S37 family.

It localises to the secreted. The protein resides in the cell surface. Its activity is regulated as follows. Completely inhibited by the serine protease inhibitor phenylmethylsulfonyl fluoride. Partially inhibited by the serine protease inhibitor Pefabloc. Not inhibited by cysteine proteinase-specific or metalloproteinase-specific inhibitors. Not inhibited by prolinal or its derivatives. EDTA and EGTA both partially inhibit this enzyme. EDTA has no effect on activity. Functionally, has proline-specific tripeptidyl aminopeptidase and tetrapeptidyl aminopeptidase activity. Activity is highest against tripeptides containing an Ala-Pro motif. Involved in the final processing of transglutaminase, by removing either the tetrapeptide Phe-Arg-Ala-Pro left after TAMEP or SAM-P45 hydrolysis, or the tripeptide Arg-Ala-Pro left after SGMP II hydrolysis in a single step. In Streptomyces mobaraensis (Streptoverticillium mobaraense), this protein is Prolyl tri/tetrapeptidyl aminopeptidase (ptp).